Reading from the N-terminus, the 205-residue chain is Protein DEPP1 (205 aa).

2 stretches are compositionally biased toward polar residues: residues 55 to 64 and 83 to 101; these read DKVTAQSRPN and GDSS…SPGT. The tract at residues 55-171 is disordered; sequence DKVTAQSRPN…RHQTSDLKSW (117 aa). A compositionally biased stretch (basic and acidic residues) spans 138–155; the sequence is MGKDTGRLCEARVPEHSL.

It localises to the cytoplasm. The protein localises to the peroxisome. Its subcellular location is the mitochondrion. Its function is as follows. Acts as a critical modulator of FOXO3-induced autophagy via increased cellular ROS. In Mus musculus (Mouse), this protein is Protein DEPP1 (Depp1).